We begin with the raw amino-acid sequence, 277 residues long: B3 domain-containing protein At3g19184 (277 aa).

The interval 33 to 94 is disordered; that stretch reads QSLRVSSSSS…LERRPRRSSR (62 aa). The segment at residues 130–221 is a DNA-binding region (TF-B3); sequence FTKPMLQSHV…TFKVYIIRVN (92 aa). The segment covering 224 to 250 has biased composition (acidic residues); it reads ANNDSDGNEVNDDDSDGNEEDRDNDNE. Residues 224-277 are disordered; sequence ANNDSDGNEVNDDDSDGNEEDRDNDNESNEKQKETVSEGRQLRSSGKRKRRGRK. Residues 251 to 264 are compositionally biased toward basic and acidic residues; that stretch reads SNEKQKETVSEGRQ. Residues 268–277 are compositionally biased toward basic residues; it reads SGKRKRRGRK.

The protein localises to the nucleus. This Arabidopsis thaliana (Mouse-ear cress) protein is B3 domain-containing protein At3g19184.